Here is a 115-residue protein sequence, read N- to C-terminus: NADH-ubiquinone oxidoreductase chain 3 (115 aa).

The next 3 helical transmembrane spans lie at 3–23, 55–75, and 84–104; these read FALILMTNTLLALLLMIITFW, FFLVAITFLLFDLEIALLLPL, and LPLMVMSSLLLIIILTLSLAY.

The protein belongs to the complex I subunit 3 family. As to quaternary structure, core subunit of respiratory chain NADH dehydrogenase (Complex I) which is composed of 45 different subunits. Interacts with TMEM186. Interacts with TMEM242.

It localises to the mitochondrion inner membrane. It catalyses the reaction a ubiquinone + NADH + 5 H(+)(in) = a ubiquinol + NAD(+) + 4 H(+)(out). In terms of biological role, core subunit of the mitochondrial membrane respiratory chain NADH dehydrogenase (Complex I) which catalyzes electron transfer from NADH through the respiratory chain, using ubiquinone as an electron acceptor. Essential for the catalytic activity of complex I. The protein is NADH-ubiquinone oxidoreductase chain 3 of Gorilla gorilla gorilla (Western lowland gorilla).